Consider the following 255-residue polypeptide: Proteasome subunit alpha (255 aa).

This sequence belongs to the peptidase T1A family. As to quaternary structure, the 20S proteasome core is composed of 14 alpha and 14 beta subunits that assemble into four stacked heptameric rings, resulting in a barrel-shaped structure. The two inner rings, each composed of seven catalytic beta subunits, are sandwiched by two outer rings, each composed of seven alpha subunits. The catalytic chamber with the active sites is on the inside of the barrel. Has a gated structure, the ends of the cylinder being occluded by the N-termini of the alpha-subunits. Is capped at one or both ends by the proteasome regulatory ATPase, PAN.

It localises to the cytoplasm. Its activity is regulated as follows. The formation of the proteasomal ATPase PAN-20S proteasome complex, via the docking of the C-termini of PAN into the intersubunit pockets in the alpha-rings, triggers opening of the gate for substrate entry. Interconversion between the open-gate and close-gate conformations leads to a dynamic regulation of the 20S proteasome proteolysis activity. Its function is as follows. Component of the proteasome core, a large protease complex with broad specificity involved in protein degradation. The sequence is that of Proteasome subunit alpha from Natronomonas pharaonis (strain ATCC 35678 / DSM 2160 / CIP 103997 / JCM 8858 / NBRC 14720 / NCIMB 2260 / Gabara) (Halobacterium pharaonis).